Here is a 150-residue protein sequence, read N- to C-terminus: Large ribosomal subunit protein bL9 (150 aa).

It belongs to the bacterial ribosomal protein bL9 family.

In terms of biological role, binds to the 23S rRNA. The sequence is that of Large ribosomal subunit protein bL9 from Aromatoleum aromaticum (strain DSM 19018 / LMG 30748 / EbN1) (Azoarcus sp. (strain EbN1)).